Here is a 71-residue protein sequence, read N- to C-terminus: MGMRMMVTVFLLVVLATTVVSLRSNRASDGRRGIVNKLNDLVPKYWTECCGRIGPHCSRCICPEVACPKNG.

The first 21 residues, 1-21 (MGMRMMVTVFLLVVLATTVVS), serve as a signal peptide directing secretion. A propeptide spanning residues 22–44 (LRSNRASDGRRGIVNKLNDLVPK) is cleaved from the precursor. Asn-70 carries the post-translational modification Asparagine amide.

This sequence belongs to the conotoxin A superfamily. In terms of processing, contains 3 disulfide bonds. They are not indicated here, since framework IV presents two different connectivities (I-V, II-III, IV-VI and I-III, II-V, IV-VI). As to expression, expressed by the venom duct.

Its subcellular location is the secreted. The protein is Conotoxin Bu24 of Conus bullatus (Bubble cone).